Consider the following 198-residue polypeptide: Ribonuclease HII (198 aa).

The RNase H type-2 domain occupies 10 to 198; sequence HLVAGVDEVG…PVKRALGLVS (189 aa). Aspartate 16, glutamate 17, and aspartate 108 together coordinate a divalent metal cation.

The protein belongs to the RNase HII family. Requires Mn(2+) as cofactor. Mg(2+) serves as cofactor.

It localises to the cytoplasm. It catalyses the reaction Endonucleolytic cleavage to 5'-phosphomonoester.. Functionally, endonuclease that specifically degrades the RNA of RNA-DNA hybrids. This chain is Ribonuclease HII, found in Salmonella schwarzengrund (strain CVM19633).